A 383-amino-acid chain; its full sequence is S-adenosylmethionine synthase (383 aa).

Residue H16 participates in ATP binding. Residue D18 coordinates Mg(2+). E44 contributes to the K(+) binding site. Residues E57 and Q98 each contribute to the L-methionine site. The flexible loop stretch occupies residues 98–108 (QSPDIAMGVDI). Residues 158–160 (DQK), 226–227 (RF), D235, 241–242 (RK), A258, and K262 contribute to the ATP site. Position 235 (D235) interacts with L-methionine. K266 contacts L-methionine.

This sequence belongs to the AdoMet synthase family. Homotetramer; dimer of dimers. Requires Mg(2+) as cofactor. K(+) is required as a cofactor.

The protein resides in the cytoplasm. The enzyme catalyses L-methionine + ATP + H2O = S-adenosyl-L-methionine + phosphate + diphosphate. It participates in amino-acid biosynthesis; S-adenosyl-L-methionine biosynthesis; S-adenosyl-L-methionine from L-methionine: step 1/1. Its function is as follows. Catalyzes the formation of S-adenosylmethionine (AdoMet) from methionine and ATP. The overall synthetic reaction is composed of two sequential steps, AdoMet formation and the subsequent tripolyphosphate hydrolysis which occurs prior to release of AdoMet from the enzyme. The protein is S-adenosylmethionine synthase of Fusobacterium nucleatum subsp. nucleatum (strain ATCC 25586 / DSM 15643 / BCRC 10681 / CIP 101130 / JCM 8532 / KCTC 2640 / LMG 13131 / VPI 4355).